Consider the following 205-residue polypeptide: SREBP regulating gene protein (205 aa).

The Cytoplasmic portion of the chain corresponds to 1–16 (MVPCGAVLWRRLLRKR). A helical transmembrane segment spans residues 17 to 35 (WVLGVVFGLSLVYFLSSTF). At 36-205 (KQEERTVRDR…GEYPPELLPV (170 aa)) the chain is on the lumenal side. N-linked (GlcNAc...) asparagine glycosylation occurs at N67.

Belongs to the SPRING family.

The protein localises to the golgi apparatus membrane. Positively regulates hepatic SREBP signaling pathway by modulating the proper localization of SCAP (SREBP cleavage-activating protein) to the endoplasmic reticulum, thereby controlling the level of functional SCAP. This is SREBP regulating gene protein from Gallus gallus (Chicken).